Consider the following 91-residue polypeptide: Small ribosomal subunit protein uS15c (91 aa).

The protein belongs to the universal ribosomal protein uS15 family. As to quaternary structure, part of the 30S ribosomal subunit.

The protein localises to the plastid. It is found in the chloroplast. The protein is Small ribosomal subunit protein uS15c (rps15) of Ceratophyllum demersum (Rigid hornwort).